We begin with the raw amino-acid sequence, 1379 residues long: DNA-directed RNA polymerase subunit beta'' (1379 aa).

Cys-224, Cys-295, Cys-302, and Cys-305 together coordinate Zn(2+). Residues 503–524 form a disordered region; sequence SVQSLSVKRRSTSKLSETNDEA.

The protein belongs to the RNA polymerase beta' chain family. RpoC2 subfamily. In terms of assembly, in plastids the minimal PEP RNA polymerase catalytic core is composed of four subunits: alpha, beta, beta', and beta''. When a (nuclear-encoded) sigma factor is associated with the core the holoenzyme is formed, which can initiate transcription. Requires Zn(2+) as cofactor.

Its subcellular location is the plastid. It catalyses the reaction RNA(n) + a ribonucleoside 5'-triphosphate = RNA(n+1) + diphosphate. Functionally, DNA-dependent RNA polymerase catalyzes the transcription of DNA into RNA using the four ribonucleoside triphosphates as substrates. This Cuscuta exaltata (Tall dodder) protein is DNA-directed RNA polymerase subunit beta''.